Reading from the N-terminus, the 339-residue chain is Holliday junction branch migration complex subunit RuvB (339 aa).

Residues 1 to 22 (MIDADPTLRPEPLPEDNDRALR) form a disordered region. The interval 1 to 182 (MIDADPTLRP…FGIPTRLQFY (182 aa)) is large ATPase domain (RuvB-L). ATP is bound by residues leucine 21, arginine 22, glycine 63, lysine 66, threonine 67, threonine 68, 129 to 131 (EDF), arginine 172, tyrosine 182, and arginine 219. Threonine 67 lines the Mg(2+) pocket. Positions 183–253 (TIDELFEIVS…LADGALTRLG (71 aa)) are small ATPAse domain (RuvB-S). Residues 256-339 (QLGLDGADRR…PPKSQSDLFG (84 aa)) form a head domain (RuvB-H) region. Residues arginine 292, arginine 311, and arginine 316 each coordinate DNA.

This sequence belongs to the RuvB family. Homohexamer. Forms an RuvA(8)-RuvB(12)-Holliday junction (HJ) complex. HJ DNA is sandwiched between 2 RuvA tetramers; dsDNA enters through RuvA and exits via RuvB. An RuvB hexamer assembles on each DNA strand where it exits the tetramer. Each RuvB hexamer is contacted by two RuvA subunits (via domain III) on 2 adjacent RuvB subunits; this complex drives branch migration. In the full resolvosome a probable DNA-RuvA(4)-RuvB(12)-RuvC(2) complex forms which resolves the HJ.

The protein resides in the cytoplasm. The catalysed reaction is ATP + H2O = ADP + phosphate + H(+). Functionally, the RuvA-RuvB-RuvC complex processes Holliday junction (HJ) DNA during genetic recombination and DNA repair, while the RuvA-RuvB complex plays an important role in the rescue of blocked DNA replication forks via replication fork reversal (RFR). RuvA specifically binds to HJ cruciform DNA, conferring on it an open structure. The RuvB hexamer acts as an ATP-dependent pump, pulling dsDNA into and through the RuvAB complex. RuvB forms 2 homohexamers on either side of HJ DNA bound by 1 or 2 RuvA tetramers; 4 subunits per hexamer contact DNA at a time. Coordinated motions by a converter formed by DNA-disengaged RuvB subunits stimulates ATP hydrolysis and nucleotide exchange. Immobilization of the converter enables RuvB to convert the ATP-contained energy into a lever motion, pulling 2 nucleotides of DNA out of the RuvA tetramer per ATP hydrolyzed, thus driving DNA branch migration. The RuvB motors rotate together with the DNA substrate, which together with the progressing nucleotide cycle form the mechanistic basis for DNA recombination by continuous HJ branch migration. Branch migration allows RuvC to scan DNA until it finds its consensus sequence, where it cleaves and resolves cruciform DNA. The chain is Holliday junction branch migration complex subunit RuvB from Ruegeria sp. (strain TM1040) (Silicibacter sp.).